A 205-amino-acid chain; its full sequence is S-crystallin SL11 (205 aa).

Residues 2–80 (PSYTLYYFNG…YLAREFGFYG (79 aa)) enclose the GST N-terminal domain. The 124-residue stretch at 82 to 205 (NNMDMFKVDC…YIKKRNNTAF (124 aa)) folds into the GST C-terminal domain.

The protein belongs to the GST superfamily. As to expression, lens.

Its function is as follows. S-crystallins are structural components of squids and octopi eye lens. Contains relatively little if any GST activity. This is S-crystallin SL11 from Nototodarus sloanii (Wellington flying squid).